Reading from the N-terminus, the 227-residue chain is 2,3-bisphosphoglycerate-dependent phosphoglycerate mutase (227 aa).

Residues 8-15 (RHGKSVWN), 21-22 (TG), Arg58, 110-113 (ERMY), Lys121, 137-138 (RR), and 181-182 (GN) each bind substrate. His9 functions as the Tele-phosphohistidine intermediate in the catalytic mechanism. The active-site Proton donor/acceptor is Glu110.

Belongs to the phosphoglycerate mutase family. BPG-dependent PGAM subfamily.

The catalysed reaction is (2R)-2-phosphoglycerate = (2R)-3-phosphoglycerate. Its pathway is carbohydrate degradation; glycolysis; pyruvate from D-glyceraldehyde 3-phosphate: step 3/5. Catalyzes the interconversion of 2-phosphoglycerate and 3-phosphoglycerate. The chain is 2,3-bisphosphoglycerate-dependent phosphoglycerate mutase from Chlamydia abortus (strain DSM 27085 / S26/3) (Chlamydophila abortus).